Reading from the N-terminus, the 2472-residue chain is Spectrin alpha chain, non-erythrocytic 1 (2472 aa).

Position 1 is an N-acetylmethionine (Met-1). Spectrin repeat units follow at residues 45 to 146 (RFQF…IKLL), 150 to 251 (KLVQ…QGKL), 256 to 358 (EVQR…ARLD), 361 to 465 (YRLQ…QYEQ), 468 to 570 (DLQL…AQLA), 574 to 676 (HLQQ…KLRE), 679 to 781 (QQQQ…QKLA), 785 to 888 (RLQQ…DLED), and 891 to 961 (QAQQ…QQVA). A Phosphoserine modification is found at Ser-587. Lys-637 is subject to N6-acetyllysine. Position 803 is an N6-acetyllysine (Lys-803). 6 positions are modified to phosphoserine: Ser-924, Ser-982, Ser-999, Ser-1029, Ser-1031, and Ser-1041. In terms of domain architecture, SH3 spans 967-1026 (TGKELVLALYDYQEKSPREVTMKKGDILTLLNSTNKDWWKVEVNDRQGFVPAAYVKKLDP). Residues 1096–1166 (LFREANELQQ…LESEGLMAEE (71 aa)) form a Spectrin 10 repeat. Tyr-1176 carries the post-translational modification Phosphotyrosine. A phosphoserine mark is found at Ser-1190, Ser-1207, Ser-1217, Ser-1291, Ser-1306, Ser-1323, and Ser-1338. Residues 1233–1336 (HEVQRFHRDA…RADQRKAKLG (104 aa)) form a Spectrin 11 repeat. Spectrin repeat units follow at residues 1339 to 1441 (HDLQ…RMML) and 1446 to 1549 (ELQL…KLGE). N6-acetyllysine is present on Lys-1519. Ser-1550, Ser-1557, Ser-1578, Ser-1615, and Ser-1647 each carry phosphoserine. 7 Spectrin repeats span residues 1552–1656 (TLQQ…KLKE), 1659–1762 (KQQN…KLSE), 1764–1868 (HRLH…RLEE), 1871–1974 (EYQQ…KLDE), 1978–2081 (FLQF…KLLE), 2092–2194 (LFLT…LELQ), and 2206–2310 (LRQE…NLEQ). The residue at position 2020 (Thr-2020) is a Phosphothreonine. N6-acetyllysine is present on Lys-2052. Residue Thr-2066 is modified to Phosphothreonine. 3 consecutive EF-hand domains span residues 2323–2358 (EALK…LGYD), 2366–2401 (EPDP…RETE), and 2404–2439 (KSSE…EQAD). Residues Asp-2336, Asp-2338, Ser-2340, Arg-2342, Glu-2347, Asp-2379, Asn-2381, Asp-2383, His-2385, and Glu-2390 each coordinate Ca(2+). At Lys-2421 the chain carries N6-acetyllysine.

The protein belongs to the spectrin family. Like erythrocyte spectrin, the spectrin-like proteins are capable of forming dimers which can further associate to tetramers. Interacts (via C-terminal spectrin repeats) with TRPC4. Interacts with CALM and EMD. Interacts with isoform 1 of ACP1. Identified in a complex with ACTN4, CASK, IQGAP1, MAGI2, NPHS1 and SPTBN1. Interacts with SHANK3 (via ANK repeats). Interacts with CLN3; this interaction regulates the fodrin localization at the plasma membrane. Phosphorylation of Tyr-1176 decreases sensitivity to cleavage by calpain in vitro. As to expression, expressed in the foot process layer of podocytes in the kidney glomerulus and in tubules (at protein level).

Its subcellular location is the cytoplasm. It localises to the cytoskeleton. It is found in the cell cortex. Fodrin, which seems to be involved in secretion, interacts with calmodulin in a calcium-dependent manner and is thus candidate for the calcium-dependent movement of the cytoskeleton at the membrane. In Rattus norvegicus (Rat), this protein is Spectrin alpha chain, non-erythrocytic 1 (Sptan1).